The primary structure comprises 451 residues: Trigger factor (451 aa).

The region spanning 173-258 (GDRVTLDFVG…LKKIEWAHLP (86 aa)) is the PPIase FKBP-type domain.

It belongs to the FKBP-type PPIase family. Tig subfamily.

The protein resides in the cytoplasm. The enzyme catalyses [protein]-peptidylproline (omega=180) = [protein]-peptidylproline (omega=0). In terms of biological role, involved in protein export. Acts as a chaperone by maintaining the newly synthesized protein in an open conformation. Functions as a peptidyl-prolyl cis-trans isomerase. In Cupriavidus pinatubonensis (strain JMP 134 / LMG 1197) (Cupriavidus necator (strain JMP 134)), this protein is Trigger factor.